The primary structure comprises 141 residues: Large ribosomal subunit protein uL11 (141 aa).

Belongs to the universal ribosomal protein uL11 family. In terms of assembly, part of the ribosomal stalk of the 50S ribosomal subunit. Interacts with L10 and the large rRNA to form the base of the stalk. L10 forms an elongated spine to which L12 dimers bind in a sequential fashion forming a multimeric L10(L12)X complex. Post-translationally, one or more lysine residues are methylated.

Forms part of the ribosomal stalk which helps the ribosome interact with GTP-bound translation factors. This is Large ribosomal subunit protein uL11 from Cyanothece sp. (strain PCC 7425 / ATCC 29141).